The sequence spans 309 residues: DSC E3 ubiquitin ligase complex subunit C (309 aa).

N-linked (GlcNAc...) asparagine glycosylation is present at asparagine 61. Disordered stretches follow at residues 88-110 (LPPS…GKGK) and 148-177 (EQAD…FDRL). A run of 2 helical transmembrane segments spans residues 257 to 277 (DDML…AMWL) and 289 to 309 (GLAV…RIMN).

This sequence belongs to the dsc3 family. As to quaternary structure, component of the DSC E3 ubiquitin ligase complex composed of dscA, dscB, dscC and dscD.

The protein localises to the endoplasmic reticulum membrane. The protein operates within protein modification; protein ubiquitination. Component of the DSC E3 ubiquitin ligase complex which is required for the srbA transcriptional activator proteolytic cleavage to release the soluble transcription factor from the membrane in low oxygen or sterol conditions. Required for growth during hypoxia and triazole drug susceptibility, as well as for virulence in a murine model of invasive pulmonary aspergillosis (IPA). This chain is DSC E3 ubiquitin ligase complex subunit C, found in Aspergillus fumigatus (strain CBS 144.89 / FGSC A1163 / CEA10) (Neosartorya fumigata).